We begin with the raw amino-acid sequence, 238 residues long: Type III secretion protein hrcQa (238 aa).

A hrcQa-C region spans residues 66-238 (DAEALLSLLG…SHEEHRHHEY (173 aa)).

In terms of assembly, interacts with hrcQb.

It localises to the cell inner membrane. Functionally, component of the type III secretion system, which is required for effector protein delivery, parasitism, and pathogenicity. Probably participates in the formation of a C-ring-like assembly along with hrcQb. In Pseudomonas savastanoi pv. phaseolicola (Pseudomonas syringae pv. phaseolicola), this protein is Type III secretion protein hrcQa (hrcQa).